A 292-amino-acid chain; its full sequence is RNA-binding P34 protein (292 aa).

A helical transmembrane segment spans residues 29–46; the sequence is CAIYTVACRILFLSVGFM. Residues 219 to 292 form an RNA-binding region; it reads EGFKSPQVEY…NFKAKNKNNE (74 aa).

Its subcellular location is the host endoplasmic reticulum membrane. Functionally, acts as a ssRNA-binding protein that may be involved in targeting RNA2 to replication sites or facilitating RNA2 replication. This Lettuce infectious yellows virus (isolate United States/92) (LIYV) protein is RNA-binding P34 protein.